A 403-amino-acid chain; its full sequence is Acetate kinase (403 aa).

Position 7 (asparagine 7) interacts with Mg(2+). Lysine 14 serves as a coordination point for ATP. Arginine 90 lines the substrate pocket. Aspartate 147 serves as the catalytic Proton donor/acceptor. ATP is bound by residues 207 to 211 (HIGNG), 283 to 285 (DMR), and 331 to 335 (GVGEN). Position 386 (glutamate 386) interacts with Mg(2+).

Belongs to the acetokinase family. Homodimer. It depends on Mg(2+) as a cofactor. The cofactor is Mn(2+).

It is found in the cytoplasm. It catalyses the reaction acetate + ATP = acetyl phosphate + ADP. It participates in metabolic intermediate biosynthesis; acetyl-CoA biosynthesis; acetyl-CoA from acetate: step 1/2. Its function is as follows. Catalyzes the formation of acetyl phosphate from acetate and ATP. Can also catalyze the reverse reaction. The sequence is that of Acetate kinase from Thermotoga petrophila (strain ATCC BAA-488 / DSM 13995 / JCM 10881 / RKU-1).